A 386-amino-acid polypeptide reads, in one-letter code: Succinate--CoA ligase [ADP-forming] subunit beta (386 aa).

The ATP-grasp domain maps to 9 to 244; that stretch reads KAVLRSYGVS…LEEEDSKEIE (236 aa). ATP-binding positions include lysine 46, 53-55, glutamate 99, cysteine 102, and glutamate 107; that span reads GRG. Asparagine 199 and aspartate 213 together coordinate Mg(2+). Residues asparagine 264 and 321–323 each bind substrate; that span reads GIM.

It belongs to the succinate/malate CoA ligase beta subunit family. In terms of assembly, heterotetramer of two alpha and two beta subunits. Mg(2+) is required as a cofactor.

The enzyme catalyses succinate + ATP + CoA = succinyl-CoA + ADP + phosphate. It catalyses the reaction GTP + succinate + CoA = succinyl-CoA + GDP + phosphate. Its pathway is carbohydrate metabolism; tricarboxylic acid cycle; succinate from succinyl-CoA (ligase route): step 1/1. Succinyl-CoA synthetase functions in the citric acid cycle (TCA), coupling the hydrolysis of succinyl-CoA to the synthesis of either ATP or GTP and thus represents the only step of substrate-level phosphorylation in the TCA. The beta subunit provides nucleotide specificity of the enzyme and binds the substrate succinate, while the binding sites for coenzyme A and phosphate are found in the alpha subunit. The polypeptide is Succinate--CoA ligase [ADP-forming] subunit beta (Bacillus mycoides (strain KBAB4) (Bacillus weihenstephanensis)).